A 184-amino-acid polypeptide reads, in one-letter code: NADH-quinone oxidoreductase subunit B (184 aa).

[4Fe-4S] cluster is bound by residues Cys-37, Cys-38, Cys-103, and Cys-132.

Belongs to the complex I 20 kDa subunit family. As to quaternary structure, NDH-1 is composed of 14 different subunits. Subunits NuoB, C, D, E, F, and G constitute the peripheral sector of the complex. [4Fe-4S] cluster is required as a cofactor.

It is found in the cell membrane. It catalyses the reaction a quinone + NADH + 5 H(+)(in) = a quinol + NAD(+) + 4 H(+)(out). NDH-1 shuttles electrons from NADH, via FMN and iron-sulfur (Fe-S) centers, to quinones in the respiratory chain. The immediate electron acceptor for the enzyme in this species is believed to be a menaquinone. Couples the redox reaction to proton translocation (for every two electrons transferred, four hydrogen ions are translocated across the cytoplasmic membrane), and thus conserves the redox energy in a proton gradient. The sequence is that of NADH-quinone oxidoreductase subunit B from Mycolicibacterium paratuberculosis (strain ATCC BAA-968 / K-10) (Mycobacterium paratuberculosis).